We begin with the raw amino-acid sequence, 21 residues long: Cardiotoxin-like basic polypeptide ah (21 aa).

The protein belongs to the three-finger toxin family. Short-chain subfamily. Orphan group XV sub-subfamily. Contains 4 disulfide bonds. In terms of tissue distribution, expressed by the venom gland.

It is found in the secreted. The protein localises to the target cell membrane. Functionally, has hemolytic activity under low-lecithin conditions. Has low cytotoxic activity. Inhibits the expression of VEGF and bFGF in human non-small-cell lung cancer cell line NCI-H1299 in a dose-dependent manner. In Naja atra (Chinese cobra), this protein is Cardiotoxin-like basic polypeptide ah.